Here is an 893-residue protein sequence, read N- to C-terminus: TBC domain-containing protein kinase-like protein (893 aa).

The Protein kinase domain maps to 1–273 (MFPLKDAEMG…PDQLMKDKVF (273 aa)). Residues 466-651 (DIPPLMRGLT…HLWDTLLLGN (186 aa)) enclose the Rab-GAP TBC domain. The interval 710 to 749 (YRQHAQPPKPSSDSSGGRSSAPYFSAECPDPPKTDLSRES) is disordered. A compositionally biased stretch (low complexity) spans 720-729 (SSDSSGGRSS). In terms of domain architecture, Rhodanese spans 790 to 889 (SKPKLLVVDI…IKPTGLLTIP (100 aa)).

It belongs to the protein kinase superfamily. Component of the FERRY complex composed of five subunits, TBCK, PPP1R21, FERRY3, CRYZL1 and GATD1 with a ratio of 1:2:1:2:4, respectively.

The protein resides in the cytoplasm. It is found in the cytoskeleton. The protein localises to the spindle. It localises to the midbody. Its subcellular location is the early endosome. In terms of biological role, component of the FERRY complex (Five-subunit Endosomal Rab5 and RNA/ribosome intermediary). The FERRY complex directly interacts with mRNAs and RAB5A, and functions as a RAB5A effector involved in the localization and the distribution of specific mRNAs most likely by mediating their endosomal transport. The complex recruits mRNAs and ribosomes to early endosomes through direct mRNA-interaction. Also involved in the modulation of mTOR signaling and expression of mTOR complex components. Involved in the control of actin-cytoskeleton organization. This is TBC domain-containing protein kinase-like protein from Homo sapiens (Human).